Consider the following 547-residue polypeptide: Probable ATP-dependent RNA helicase DDX56 (547 aa).

The Q motif signature appears at 7–35; the sequence is LGFEHMGLDPRLLQAVTDLGWSRPTLIQE. Residues 38-218 enclose the Helicase ATP-binding domain; that stretch reads IPLALEGKDL…ELILHNPVTL (181 aa). 51 to 58 provides a ligand contact to ATP; the sequence is ARTGSGKT. Phosphoserine is present on serine 126. Residue threonine 141 is modified to Phosphothreonine. Residues 166-169 carry the DEAD box motif; the sequence is DEAD. The 195-residue stretch at 230-424 folds into the Helicase C-terminal domain; the sequence is QLQQFQVVCE…PYQFRMEEIE (195 aa). Composition is skewed to basic residues over residues 506–525 and 532–547; these read RPHK…KRAK and SFKH…AKPS. Residues 506–547 are disordered; it reads RPHKKRKKLSSSCRKAKRAKSQNPLRSFKHKGKKFRPTAKPS. Serine 532 bears the Phosphoserine mark.

This sequence belongs to the DEAD box helicase family. DDX56/DBP9 subfamily. May form homooligomeric complexes. Interacts with IRF3. Interacts with OCT4 and POU5F1. In terms of assembly, (Microbial infection) Interacts with West Nile virus capsid protein C. As to quaternary structure, (Microbial infection) Interacts with foot-and-mouth disease virus protein 3A; this interaction leads to inhibition of type I interferon production. (Microbial infection) Interacts with EMCV protein 3C; this interaction leads to inhibition of type I interferon production. As to expression, detected in heart, brain, liver, pancreas, placenta and lung.

The protein resides in the nucleus. The protein localises to the nucleolus. It catalyses the reaction ATP + H2O = ADP + phosphate + H(+). Nucleolar RNA helicase that plays a role in various biological processes including innate immunity, ribosome biogenesis or nucleolus organization. Plays an essential role in maintaining nucleolar integrity in planarian stem cells. Maintains embryonic stem cells proliferation by conventional regulation of ribosome assembly and interaction with OCT4 and POU5F1 complex. Regulates antiviral innate immunity by inhibiting the virus-triggered signaling nuclear translocation of IRF3. Mechanistically, acts by disrupting the interaction between IRF3 and importin IPO5. May play a role in later stages of the processing of the pre-ribosomal particles leading to mature 60S ribosomal subunits. Has intrinsic ATPase activity. Its function is as follows. (Microbial infection) Helicase activity is important for packaging viral RNA into virions during West Nile virus infection. In terms of biological role, (Microbial infection) Plays a positive role in foot-and-mouth disease virus replication by inhibiting the phosphorylation of IRF3 leading to inhibition of type I interferon. Functionally, (Microbial infection) Plays a positive role in EMCV replication by interrupting IRF3 phosphorylation and its nucleus translocation. The sequence is that of Probable ATP-dependent RNA helicase DDX56 (DDX56) from Homo sapiens (Human).